Consider the following 461-residue polypeptide: Tubulin gamma chain (461 aa).

142–148 (AGGTGSG) is a GTP binding site.

It belongs to the tubulin family.

The protein localises to the cytoplasm. It localises to the cytoskeleton. Its subcellular location is the microtubule organizing center. The protein resides in the spindle pole body. In terms of biological role, tubulin is the major constituent of microtubules. The gamma chain is found at microtubule organizing centers (MTOC) such as the spindle poles or the centrosome, suggesting that it is involved in the minus-end nucleation of microtubule assembly. The sequence is that of Tubulin gamma chain (tbg) from Neurospora crassa (strain ATCC 24698 / 74-OR23-1A / CBS 708.71 / DSM 1257 / FGSC 987).